The primary structure comprises 286 residues: Formamidopyrimidine-DNA glycosylase (286 aa).

Residue Pro-2 is the Schiff-base intermediate with DNA of the active site. The active-site Proton donor is Glu-3. The active-site Proton donor; for beta-elimination activity is the Lys-60. Residues His-103, Arg-122, and Arg-167 each coordinate DNA. An FPG-type zinc finger spans residues 252–286 (WVYRRNQKPCRKCGTLIEKTKVAGRSTHWCPNCQN). The active-site Proton donor; for delta-elimination activity is the Arg-276.

This sequence belongs to the FPG family. In terms of assembly, monomer. The cofactor is Zn(2+).

The catalysed reaction is Hydrolysis of DNA containing ring-opened 7-methylguanine residues, releasing 2,6-diamino-4-hydroxy-5-(N-methyl)formamidopyrimidine.. It catalyses the reaction 2'-deoxyribonucleotide-(2'-deoxyribose 5'-phosphate)-2'-deoxyribonucleotide-DNA = a 3'-end 2'-deoxyribonucleotide-(2,3-dehydro-2,3-deoxyribose 5'-phosphate)-DNA + a 5'-end 5'-phospho-2'-deoxyribonucleoside-DNA + H(+). Functionally, involved in base excision repair of DNA damaged by oxidation or by mutagenic agents. Acts as a DNA glycosylase that recognizes and removes damaged bases. Has a preference for oxidized purines, such as 7,8-dihydro-8-oxoguanine (8-oxoG). Has AP (apurinic/apyrimidinic) lyase activity and introduces nicks in the DNA strand. Cleaves the DNA backbone by beta-delta elimination to generate a single-strand break at the site of the removed base with both 3'- and 5'-phosphates. This chain is Formamidopyrimidine-DNA glycosylase, found in Prochlorococcus marinus (strain MIT 9211).